The sequence spans 262 residues: Demethyldecarbamoylnovobiocin O-methyltransferase (262 aa).

S-adenosyl-L-methionine is bound at residue 64–65 (TM). Glu-72 acts as the Proton acceptor in catalysis. Residues 92–96 (ETGVW), 122–126 (DSFQG), Phe-178, 196–197 (DG), and Ser-202 each bind S-adenosyl-L-methionine. Residue Asp-196 participates in Mg(2+) binding. Positions 223 and 224 each coordinate Mg(2+).

It belongs to the methyltransferase TylF/MycF family. Homodimer. It depends on Mg(2+) as a cofactor.

It catalyses the reaction desmethyldescarbamoylnovobiocin + S-adenosyl-L-methionine = descarbamoylnovobiocin + S-adenosyl-L-homocysteine + H(+). It participates in antibiotic biosynthesis; novobiocin biosynthesis. In terms of biological role, S-adenosyl-L-methionine-dependent O-methyltransferase that methylates at 4-OH of the noviose moiety, the penultimate step in the novobiocin biosynthesis pathway. Novobiocin is an aminocoumarin family antibiotic that targets bacterial DNA gyrases. This chain is Demethyldecarbamoylnovobiocin O-methyltransferase (novP), found in Streptomyces niveus (Streptomyces spheroides).